The sequence spans 684 residues: Threonine--tRNA ligase (684 aa).

Positions 1-66 (MSTAASPAPA…DADVEVVPVP (66 aa)) constitute a TGS domain. Residues 261-567 (DHRKLGVELD…LTEHYAGAFP (307 aa)) form a catalytic region. Residues Cys-366, His-417, and His-544 each coordinate Zn(2+).

It belongs to the class-II aminoacyl-tRNA synthetase family. In terms of assembly, homodimer. The cofactor is Zn(2+).

The protein resides in the cytoplasm. It carries out the reaction tRNA(Thr) + L-threonine + ATP = L-threonyl-tRNA(Thr) + AMP + diphosphate + H(+). Its function is as follows. Catalyzes the attachment of threonine to tRNA(Thr) in a two-step reaction: L-threonine is first activated by ATP to form Thr-AMP and then transferred to the acceptor end of tRNA(Thr). Also edits incorrectly charged L-seryl-tRNA(Thr). The sequence is that of Threonine--tRNA ligase from Mycobacterium sp. (strain KMS).